We begin with the raw amino-acid sequence, 316 residues long: CXXC-type zinc finger protein 5 (316 aa).

Gly residues predominate over residues 1–10; the sequence is MSSLGGGSQD. The disordered stretch occupies residues 1–95; sequence MSSLGGGSQD…SGGAGSMMGG (95 aa). Low complexity-rich tracts occupy residues 11–27 and 36–50; these read AGGSSSSSNTSSSSGSG and SATVAATAPASVADD. The CXXC-type zinc finger occupies 250–291; the sequence is GKKKRKRCGMCAPCRRRINCEQCSSCRNRKTGHQICKFRKCE. A Nuclear localization signal motif is present at residues 251-256; the sequence is KKKRKR. The Zn(2+) site is built by C257, C260, C263, C269, C272, C275, C285, and C290.

As to quaternary structure, interacts with DVL1. Interacts with RBPJ. In terms of tissue distribution, expressed in neural stem cells (at protein level). Expressed in the dorsal telencephalon.

It localises to the nucleus. The protein localises to the cytoplasm. In terms of biological role, may indirectly participate in activation of the NF-kappa-B and MAPK pathways. Required for DNA damage-induced ATM phosphorylation, p53 activation and cell cycle arrest. Involved in myelopoiesis. Acts as a mediator of BMP4-mediated modulation of canonical Wnt signaling activity in neural stem cells. Binds to the oxygen responsive element of COX4I2 and represses its transcription under hypoxia conditions (4% oxygen), as well as normoxia conditions (20% oxygen). May repress COX4I2 transactivation induced by CHCHD2 and RBPJ. Binds preferentially to DNA containing cytidine-phosphate-guanosine (CpG) dinucleotides over CpH (H=A, T, and C), hemimethylated-CpG and hemimethylated-hydroxymethyl-CpG. The chain is CXXC-type zinc finger protein 5 (Cxxc5) from Rattus norvegicus (Rat).